The following is a 546-amino-acid chain: Amidase FG08078 (546 aa).

Catalysis depends on charge relay system residues Lys-129 and Ser-204. Ser-228 functions as the Acyl-ester intermediate in the catalytic mechanism.

The protein belongs to the amidase family.

It functions in the pathway mycotoxin biosynthesis. Amidase; part of the gene cluster that mediates the biosynthesis of butenolide, a mycotoxin that shows antibiotic activity but does not seem to play a major role in the spread of head blight in wheat. Butenolide is derived from glutamic acid via a 4-acetamido-2-butenoic acid intermediate. The predicted function of the NADH:flavin oxidoreductase FG08077, the cytochrome P450 monooxygenase FG08079, the decarboxylase FG08083, and the putative acetyltransferase FG08082 are consistent with this pathway, however, the respective activities of the butelonide biosynthesis cluster enzymes have still to be experimentally determined. This chain is Amidase FG08078, found in Gibberella zeae (strain ATCC MYA-4620 / CBS 123657 / FGSC 9075 / NRRL 31084 / PH-1) (Wheat head blight fungus).